The primary structure comprises 35 residues: Mu-theraphotoxin-Ca2a (35 aa).

3 cysteine pairs are disulfide-bonded: C2-C17, C9-C24, and C16-C31.

This sequence belongs to the neurotoxin 10 (Hwtx-1) family. 10 (haplotoxin-1) subfamily. Expressed by the venom gland.

Its subcellular location is the secreted. Functionally, potently inhibits Nav1.7/SCN9A (IC(50)=98.1 nM), and moderately inhibits Nav1.2/SCN2A (IC(50)=216.3 nM), Nav1.6/SCN8A (IC(50)=313.6 nM), and Nav1.3/SCN3A (IC(50)=491.3 nM). Hyperpolarizes the slow inactivation, but does not alter the voltage-dependent activation or fast inactivation of Nav1.7/SCN9A. Binds with Nav1.7/SCN9A at the extracellular S3-S4 linker of domain II (site 4). In vivo, exhibits dose-dependent analgesic efficacy by reducing pain responses in rodent models of formalin-induced paw licking, hot plate test, and acetic acid-induced writhing. In Cyriopagopus albostriatus (Cambodian tiger tarantula), this protein is Mu-theraphotoxin-Ca2a.